Reading from the N-terminus, the 251-residue chain is Elongation factor Ts (251 aa).

Residues 82 to 85 (TDFV) are involved in Mg(2+) ion dislocation from EF-Tu. The disordered stretch occupies residues 215-251 (QMGQKAPEPVAAAPQVEEKAPEPAAKDNPPAKGKKKK). The segment covering 219–229 (KAPEPVAAAPQ) has biased composition (low complexity). The span at 230–239 (VEEKAPEPAA) shows a compositional bias: basic and acidic residues.

It belongs to the EF-Ts family.

It is found in the cytoplasm. Associates with the EF-Tu.GDP complex and induces the exchange of GDP to GTP. It remains bound to the aminoacyl-tRNA.EF-Tu.GTP complex up to the GTP hydrolysis stage on the ribosome. This is Elongation factor Ts from Microcystis aeruginosa (strain NIES-843 / IAM M-2473).